The sequence spans 574 residues: Thiol:disulfide interchange protein DsbD (574 aa).

An N-terminal signal peptide occupies residues 1 to 19; that stretch reads MAHRILTLILLFCSAHASA. Cys-122 and Cys-128 form a disulfide bridge. The tract at residues 147 to 169 is disordered; the sequence is VKANAATPSAATGEQTRVNSDSP. Positions 152–169 are enriched in polar residues; it reads ATPSAATGEQTRVNSDSP. The next 7 membrane-spanning stretches (helical) occupy residues 173–193, 218–238, 253–273, 306–326, 333–353, 367–387, and 399–419; these read LPFS…TPCV, LLAF…GLVV, WVLV…FGLF, IAGL…LLYI, WLGG…LILV, WMEQ…VFLL, and LWSV…LNAT. A disulfide bridge connects residues Cys-192 and Cys-314. One can recognise a Thioredoxin domain in the interval 430 to 574; sequence LLGAAMICAR…FATHLHNRLR (145 aa). Residues Cys-489 and Cys-492 are joined by a disulfide bond.

It belongs to the thioredoxin family. DsbD subfamily.

It is found in the cell inner membrane. It catalyses the reaction [protein]-dithiol + NAD(+) = [protein]-disulfide + NADH + H(+). The catalysed reaction is [protein]-dithiol + NADP(+) = [protein]-disulfide + NADPH + H(+). Required to facilitate the formation of correct disulfide bonds in some periplasmic proteins and for the assembly of the periplasmic c-type cytochromes. Acts by transferring electrons from cytoplasmic thioredoxin to the periplasm. This transfer involves a cascade of disulfide bond formation and reduction steps. This Cronobacter sakazakii (strain ATCC BAA-894) (Enterobacter sakazakii) protein is Thiol:disulfide interchange protein DsbD.